Here is a 232-residue protein sequence, read N- to C-terminus: AA9 family lytic polysaccharide monooxygenase C (232 aa).

A signal peptide spans 1-19 (MKAAVSLALLVAVAGAASA). Residues His20 and His91 each coordinate Cu(2+). The cysteines at positions 61 and 180 are disulfide-linked. O2-binding residues include His166 and Gln175. Residue Tyr177 participates in Cu(2+) binding. N-linked (GlcNAc...) asparagine glycosylation is present at Asn184.

It belongs to the polysaccharide monooxygenase AA9 family. Cu(2+) is required as a cofactor.

It localises to the secreted. The catalysed reaction is [(1-&gt;4)-beta-D-glucosyl]n+m + reduced acceptor + O2 = 4-dehydro-beta-D-glucosyl-[(1-&gt;4)-beta-D-glucosyl]n-1 + [(1-&gt;4)-beta-D-glucosyl]m + acceptor + H2O.. Functionally, lytic polysaccharide monooxygenase (LPMO) that depolymerizes crystalline and amorphous polysaccharides via the oxidation of scissile alpha- or beta-(1-4)-glycosidic bonds, yielding C1 or C4 oxidation products. Catalysis by LPMOs requires the reduction of the active-site copper from Cu(II) to Cu(I) by a reducing agent and H(2)O(2) or O(2) as a cosubstrate. The chain is AA9 family lytic polysaccharide monooxygenase C from Malbranchea cinnamomea (Thermophilic fungus).